We begin with the raw amino-acid sequence, 190 residues long: Peptidyl-tRNA hydrolase (190 aa).

A tRNA-binding site is contributed by Phe-14. The active-site Proton acceptor is the His-19. Residues Met-64, Asn-66, and Asn-112 each coordinate tRNA.

The protein belongs to the PTH family. Monomer.

It localises to the cytoplasm. The enzyme catalyses an N-acyl-L-alpha-aminoacyl-tRNA + H2O = an N-acyl-L-amino acid + a tRNA + H(+). Functionally, hydrolyzes ribosome-free peptidyl-tRNAs (with 1 or more amino acids incorporated), which drop off the ribosome during protein synthesis, or as a result of ribosome stalling. Catalyzes the release of premature peptidyl moieties from peptidyl-tRNA molecules trapped in stalled 50S ribosomal subunits, and thus maintains levels of free tRNAs and 50S ribosomes. The sequence is that of Peptidyl-tRNA hydrolase from Staphylococcus haemolyticus (strain JCSC1435).